The following is a 465-amino-acid chain: Opioid growth factor receptor-like protein 1 (465 aa).

Disordered regions lie at residues Met-1–Lys-89 and Glu-309–Gly-465. Composition is skewed to basic and acidic residues over residues Arg-48 to Gly-59, Pro-316 to Lys-325, Thr-363 to Glu-396, and Ser-426 to Glu-440. A compositionally biased stretch (polar residues) spans Pro-442–Gly-465.

The protein belongs to the opioid growth factor receptor family.

This chain is Opioid growth factor receptor-like protein 1 (Ogfrl1), found in Rattus norvegicus (Rat).